The sequence spans 217 residues: RING-H2 finger protein ATL70 (217 aa).

A helical membrane pass occupies residues 61-81 (IGGFRYGIGVSIGVLLLITTI). The segment at 147 to 189 (CAICLGDYKGKHLLRQLPDCNHLFHLKCIDTWLRLNPTCPVCR) adopts an RING-type; atypical zinc-finger fold.

This sequence belongs to the RING-type zinc finger family. ATL subfamily.

The protein resides in the membrane. The catalysed reaction is S-ubiquitinyl-[E2 ubiquitin-conjugating enzyme]-L-cysteine + [acceptor protein]-L-lysine = [E2 ubiquitin-conjugating enzyme]-L-cysteine + N(6)-ubiquitinyl-[acceptor protein]-L-lysine.. It functions in the pathway protein modification; protein ubiquitination. In Arabidopsis thaliana (Mouse-ear cress), this protein is RING-H2 finger protein ATL70 (ATL70).